The chain runs to 775 residues: MNKKSLPLMALRDIVVFPGVIAPVFVGRQKSLHALSNTTLSEEDNSKYILVTLQKKFDQENPNRNELYDVGILAKVIQIVKLPNTTAKILVEAIARVKISNIKGDEAFEANYEIIPDEEIFDANNMRSLVDNAVQLFAKYAGSDKKINAEIIETINKEISETSNFINIINILASHLITSLEEKQRLLEETSPFKRISTIINILTSNIVNSETEQALQQRVKKQIEKTQRDYYLHEQMKAIQKELDEDKSDLAEFDKKIKAAKLSKEAREKAEAELKKLRTMNQMSAESGVTRNYLETLLSLPWGKYDNSKIDINQAEKILNRDHFGLEKVKERIIEYLAVLQRSSKIRGPILCLIGPPGVGKTSLIKSIAEGMGRKYTKFALGGVRDEAEIRGHRKTYLGSMPGKILTQLKKVKTSNPVMLLDEIDKMGSDFRGDPASALLEVLDPEQNSHFVDHYLEVEYDLSNVIFIATANSYNLPRALIDRMEIIDISGYMEEEKIQIAKNYLVPKQLKMHKIKKDEITISDDAILDLIRYYTKESGVRSLEREIGALTRKALKQILADKKVKHISVDSNNLEEFLGARKYNFGLAEKNDQIGSTTGLAYTEVGGELLTIEALSFPGKGEIKTTGKLGDVMKESAMAAYSCFRSRAADFGLKYEDYKDFDVHIHVPAGAIPKDGPSAGCALFTTIVSLMTKIPVRRTVAMTGEVTLRGNVLPIGGLKEKLLAASRGGIKTVLIPEENVKDLKDIPPNIKSSLEIIPVSNIDQVLEHALTKKT.

A Lon N-terminal domain is found at 6–207; the sequence is LPLMALRDIV…TIINILTSNI (202 aa). 356-363 contributes to the ATP binding site; sequence GPPGVGKT. Positions 592 to 773 constitute a Lon proteolytic domain; sequence NDQIGSTTGL…DQVLEHALTK (182 aa). Active-site residues include Ser-679 and Lys-722.

It belongs to the peptidase S16 family. Homohexamer. Organized in a ring with a central cavity.

It is found in the cytoplasm. The enzyme catalyses Hydrolysis of proteins in presence of ATP.. Its function is as follows. ATP-dependent serine protease that mediates the selective degradation of mutant and abnormal proteins as well as certain short-lived regulatory proteins. Required for cellular homeostasis and for survival from DNA damage and developmental changes induced by stress. Degrades polypeptides processively to yield small peptide fragments that are 5 to 10 amino acids long. Binds to DNA in a double-stranded, site-specific manner. This Rickettsia bellii (strain RML369-C) protein is Lon protease.